Consider the following 243-residue polypeptide: Ornithine decarboxylase antizyme 3 (243 aa).

Ser-6, Ser-9, and Ser-12 each carry phosphoserine.

Belongs to the ODC antizyme family. As to quaternary structure, interacts with ODC1 and thereby sterically blocks ODC homodimerization. Interacts with AZIN2; this interaction disrupts the interaction between the antizyme and ODC1. Interacts with GGN. In terms of tissue distribution, testis specific. Expressed throughout the differentiation process from spermatids to spermatozoa in the inner part of the seminiferous tubules.

The protein localises to the nucleus. The protein resides in the cytoplasm. In terms of biological role, ornithine decarboxylase (ODC) antizyme protein that negatively regulates ODC activity and intracellular polyamine biosynthesis and uptake in response to increased intracellular polyamine levels. Binds to ODC monomers, inhibiting the assembly of the functional ODC homodimers. Does not target the ODC monomers for degradation, which allows a protein synthesis-independent restoration of ODC activity. Stabilizes AZIN2 by interfering with its ubiquitination. Involved in the translocation of AZNI2 from ER-Golgi intermediate compartment (ERGIC) to the cytosol. Probably plays a key role in spermatogenesis by regulating the intracellular concentration of polyamines in haploid germ cells. This chain is Ornithine decarboxylase antizyme 3 (Oaz3), found in Mus musculus (Mouse).